Here is a 348-residue protein sequence, read N- to C-terminus: Protein RecA (348 aa).

ATP is bound at residue 66–73 (GPESSGKT).

The protein belongs to the RecA family.

The protein resides in the cytoplasm. In terms of biological role, can catalyze the hydrolysis of ATP in the presence of single-stranded DNA, the ATP-dependent uptake of single-stranded DNA by duplex DNA, and the ATP-dependent hybridization of homologous single-stranded DNAs. It interacts with LexA causing its activation and leading to its autocatalytic cleavage. The chain is Protein RecA from Burkholderia lata (strain ATCC 17760 / DSM 23089 / LMG 22485 / NCIMB 9086 / R18194 / 383).